The chain runs to 81 residues: Exodeoxyribonuclease 7 small subunit (81 aa).

This sequence belongs to the XseB family. Heterooligomer composed of large and small subunits.

It localises to the cytoplasm. The catalysed reaction is Exonucleolytic cleavage in either 5'- to 3'- or 3'- to 5'-direction to yield nucleoside 5'-phosphates.. Functionally, bidirectionally degrades single-stranded DNA into large acid-insoluble oligonucleotides, which are then degraded further into small acid-soluble oligonucleotides. The sequence is that of Exodeoxyribonuclease 7 small subunit from Pseudomonas syringae pv. syringae (strain B728a).